Here is a 660-residue protein sequence, read N- to C-terminus: Solute carrier family 5 member 4 (660 aa).

At 1 to 28 (MASTLSPSTVTKTPGPPEISERIQNAAD) the chain is on the cytoplasmic side. A helical membrane pass occupies residues 29 to 47 (ISVIVIYFVVVMAVGLWAM). The Extracellular portion of the chain corresponds to 48–64 (LRTNRGTVGGFFLAGRD). The chain crosses the membrane as a helical span at residues 65 to 85 (VTWWPMGASLFASNIGSGHFV). At 86 to 105 (GLAGTGAASGIAIAAFEWNA) the chain is on the cytoplasmic side. The chain crosses the membrane as a helical span at residues 106 to 126 (LLLLLVLGWFFVPIYIKAGVM). Topologically, residues 127 to 171 (TMPEYLRKRFGGKRLQIYLSILSLFICVALRISSDIFSGAIFIKL) are extracellular. Residues 172–191 (ALGLDLYLAIFSLLAITAIY) traverse the membrane as a helical segment. Residues 192–208 (TITGGLASVIYTDTLQT) are Cytoplasmic-facing. A helical membrane pass occupies residues 209–229 (IIMLIGSFILMGFAFVEVGGY). Residues 230 to 270 (ESFTEKYMNAIPTIVEGDNLTISPKCYTPQGDSFHIFRDAV) lie on the Extracellular side of the membrane. Asn248 carries N-linked (GlcNAc...) asparagine glycosylation. The helical transmembrane segment at 271–291 (TGDIPWPGMIFGMTVVAAWYW) threads the bilayer. Residues 292-314 (CTDQVIVQRCLSGKDMSHVKAAC) lie on the Cytoplasmic side of the membrane. The helical transmembrane segment at 315–334 (IMCGYLKLLPMFLMVMPGMI) threads the bilayer. The Extracellular portion of the chain corresponds to 335–423 (SRILYTEKVA…RKQASEKELL (89 aa)). A helical membrane pass occupies residues 424–443 (IAGRLFIILLIVISIVWVPL). The Cytoplasmic portion of the chain corresponds to 444–455 (VQVAQNGQLFHY). The chain crosses the membrane as a helical span at residues 456-476 (IESISSYLGPPIAAVFLLAIF). At 477–526 (CKRVNEQGAFWGLIIGFVMGLIRMIAEFVYGTGSCLAASNCPQIICGVHY) the chain is on the extracellular side. A helical membrane pass occupies residues 527 to 547 (LYFALILFFVSILVVLAISLL). Residues 548–638 (TKPIPDVHLY…TDTSEKPLWK (91 aa)) are Cytoplasmic-facing. A helical transmembrane segment spans residues 639 to 659 (TIVNINAILLLAVAVFVHGYF).

The protein belongs to the sodium:solute symporter (SSF) (TC 2.A.21) family. As to expression, kidney, intestine, liver, skeletal muscle and spleen.

The protein resides in the cell membrane. The catalysed reaction is D-glucose(out) + 2 Na(+)(out) = D-glucose(in) + 2 Na(+)(in). Inhibited by phlorizin. Its function is as follows. Low-affinity sodium/D-glucose symporter with a great selectivity for sugars (D-glucose &gt;&gt; D-galactose). Na(+) and D-glucose transport are tightly coupled at neutral pH, but at acidic pH, ion transport is uncoupled from sugar transport. In Sus scrofa (Pig), this protein is Solute carrier family 5 member 4.